Consider the following 267-residue polypeptide: NADP-dependent mannitol dehydrogenase (267 aa).

Residues N108 and K141 each contribute to the NADP(+) site. S160 functions as the Proton donor in the catalytic mechanism. NADP(+) contacts are provided by Y175, K179, I207, and T209. The active-site Proton acceptor is the Y175. K179 acts as the Lowers pKa of active site Tyr in catalysis.

Belongs to the short-chain dehydrogenases/reductases (SDR) family. Exists as monomer, dimer and tetramer.

The catalysed reaction is D-mannitol + NADP(+) = D-fructose + NADPH + H(+). Its function is as follows. Interconverts D-mannitol and D-fructose. Not active with fructose 6-phosphate or NADH. The chain is NADP-dependent mannitol dehydrogenase from Davidiella tassiana (Mycosphaerella tassiana).